A 368-amino-acid chain; its full sequence is Microtubule-associated protein Jupiter (368 aa).

Serine 30 carries the post-translational modification Phosphoserine. A Phosphothreonine modification is found at threonine 41. The segment covering 81 to 93 has biased composition (basic and acidic residues); that stretch reads RRGQKSVDSHSRL. The segment at 81-106 is disordered; that stretch reads RRGQKSVDSHSRLFGEPSRPITPGKN. Threonine 102 is modified (phosphothreonine). Residues serine 111, serine 146, and serine 157 each carry the phosphoserine modification. Composition is skewed to low complexity over residues 129–157 and 238–248; these read NGNT…VSSS and GRYGYSSQSRR. Disordered regions lie at residues 129 to 164, 196 to 256, and 316 to 368; these read NGNT…LKIN, SQGN…SPLN, and KPKK…SGLW. The segment covering 337-354 has biased composition (polar residues); sequence GSDSAQTPTMNGANQVIN.

The protein belongs to the MAP Jupiter family.

Its subcellular location is the nucleus. The protein localises to the cytoplasm. The protein resides in the cytoskeleton. It localises to the spindle. Its function is as follows. Binds to all microtubule populations. The protein is Microtubule-associated protein Jupiter of Drosophila willistoni (Fruit fly).